We begin with the raw amino-acid sequence, 171 residues long: Tetratricopeptide repeat protein 9C (171 aa).

TPR repeat units lie at residues 8–41 (AQLY…LRGL), 72–107 (TDCY…QPDN), and 108–141 (AKAL…QPKD).

It belongs to the TTC9 family.

The sequence is that of Tetratricopeptide repeat protein 9C (TTC9C) from Homo sapiens (Human).